A 256-amino-acid chain; its full sequence is tRNA pseudouridine synthase A (256 aa).

Asp-52 (nucleophile) is an active-site residue. Tyr-110 contacts substrate.

This sequence belongs to the tRNA pseudouridine synthase TruA family. Homodimer.

The enzyme catalyses uridine(38/39/40) in tRNA = pseudouridine(38/39/40) in tRNA. Functionally, formation of pseudouridine at positions 38, 39 and 40 in the anticodon stem and loop of transfer RNAs. The polypeptide is tRNA pseudouridine synthase A (Stenotrophomonas maltophilia (strain R551-3)).